A 635-amino-acid polypeptide reads, in one-letter code: Biosynthetic arginine decarboxylase (635 aa).

Lys-103 is modified (N6-(pyridoxal phosphate)lysine). 283–293 (FDVGGGLGVDY) contributes to the substrate binding site.

This sequence belongs to the Orn/Lys/Arg decarboxylase class-II family. SpeA subfamily. It depends on Mg(2+) as a cofactor. Pyridoxal 5'-phosphate serves as cofactor.

It carries out the reaction L-arginine + H(+) = agmatine + CO2. The protein operates within amine and polyamine biosynthesis; agmatine biosynthesis; agmatine from L-arginine: step 1/1. In terms of biological role, catalyzes the biosynthesis of agmatine from arginine. This Proteus mirabilis (strain HI4320) protein is Biosynthetic arginine decarboxylase.